Here is a 139-residue protein sequence, read N- to C-terminus: Acyl carrier protein 5, chloroplastic (139 aa).

The N-terminal 54 residues, Met-1 to Ser-54, are a transit peptide targeting the chloroplast. One can recognise a Carrier domain in the interval Gln-59–Val-134. The residue at position 94 (Ser-94) is an O-(pantetheine 4'-phosphoryl)serine.

This sequence belongs to the acyl carrier protein (ACP) family. 4'-phosphopantetheine is transferred from CoA to a specific serine of apo-ACP by acpS. This modification is essential for activity because fatty acids are bound in thioester linkage to the sulfhydryl of the prosthetic group.

It localises to the plastid. The protein resides in the chloroplast. Its function is as follows. Carrier of the growing fatty acid chain in fatty acid biosynthesis. The protein is Acyl carrier protein 5, chloroplastic (ACP5) of Arabidopsis thaliana (Mouse-ear cress).